Here is a 306-residue protein sequence, read N- to C-terminus: Solute carrier family 25 member 48 (306 aa).

Solcar repeat units follow at residues 3 to 86, 101 to 200, and 209 to 296; these read SFQL…TQRF, RSLS…LSEW, and PSPY…SLKA. The next 6 helical transmembrane spans lie at 9 to 29, 61 to 81, 107 to 127, 184 to 204, 212 to 232, and 272 to 290; these read FVAG…LDTV, GMSF…GVFS, LLAS…VELI, IPGY…ITPE, YAAW…ATPM, and ITVN…FLGY.

This sequence belongs to the mitochondrial carrier (TC 2.A.29) family.

The protein resides in the mitochondrion inner membrane. The protein is Solute carrier family 25 member 48 (Slc25a48) of Mus musculus (Mouse).